The following is a 447-amino-acid chain: ATP-dependent 6-phosphofructokinase (447 aa).

ATP contacts are provided by residues Gly-88, 154 to 155 (RG), and 179 to 182 (GDGT). Asp-180 is a Mg(2+) binding site. Residues 208 to 210 (TVD), 253 to 255 (MGR), Glu-315, and 368 to 371 (YIIR) contribute to the substrate site. Asp-210 (proton acceptor) is an active-site residue.

This sequence belongs to the phosphofructokinase type A (PFKA) family. PPi-dependent PFK group II subfamily. Atypical ATP-dependent clade 'X' sub-subfamily. Homodimer. It depends on Mg(2+) as a cofactor.

The protein resides in the cytoplasm. The enzyme catalyses beta-D-fructose 6-phosphate + ATP = beta-D-fructose 1,6-bisphosphate + ADP + H(+). The protein operates within carbohydrate degradation; glycolysis; D-glyceraldehyde 3-phosphate and glycerone phosphate from D-glucose: step 3/4. Its function is as follows. Catalyzes the phosphorylation of D-fructose 6-phosphate to fructose 1,6-bisphosphate by ATP, the first committing step of glycolysis. The sequence is that of ATP-dependent 6-phosphofructokinase from Borreliella burgdorferi (strain ATCC 35210 / DSM 4680 / CIP 102532 / B31) (Borrelia burgdorferi).